A 611-amino-acid chain; its full sequence is Chaperone protein DnaK (611 aa).

Residue Thr173 is modified to Phosphothreonine; by autocatalysis. Positions 577–592 (QAAAGQAEGAQGAQDA) are enriched in low complexity. Residues 577–611 (QAAAGQAEGAQGAQDAGTKKDNVVDAEFEEVKEDK) form a disordered region. Acidic residues predominate over residues 600-611 (VDAEFEEVKEDK).

Belongs to the heat shock protein 70 family.

In terms of biological role, acts as a chaperone. This Bacillus cereus (strain G9842) protein is Chaperone protein DnaK.